The primary structure comprises 707 residues: Polyribonucleotide nucleotidyltransferase (707 aa).

Positions 491 and 497 each coordinate Mg(2+). One can recognise a KH domain in the interval 558-617; it reads PRIEKIKIHPDKIGLLIGPGGKTIKKISAESGAEITIEDDGTVMIYSSSADSLEAAREMI. Positions 622–695 constitute an S1 motif domain; it reads GEVTVGGIYR…EKGRYKFSRK (74 aa).

The protein belongs to the polyribonucleotide nucleotidyltransferase family. Mg(2+) serves as cofactor.

Its subcellular location is the cytoplasm. The catalysed reaction is RNA(n+1) + phosphate = RNA(n) + a ribonucleoside 5'-diphosphate. Functionally, involved in mRNA degradation. Catalyzes the phosphorolysis of single-stranded polyribonucleotides processively in the 3'- to 5'-direction. This is Polyribonucleotide nucleotidyltransferase from Methylacidiphilum infernorum (isolate V4) (Methylokorus infernorum (strain V4)).